The primary structure comprises 388 residues: Carbamoyl phosphate synthase small chain (388 aa).

The tract at residues 1-194 is CPSase; the sequence is MAQNPLSKPT…WPEGYARQEA (194 aa). Positions 53, 246, and 248 each coordinate L-glutamine. In terms of domain architecture, Glutamine amidotransferase type-1 spans 198–387; that stretch reads KVVAIDYGAK…AAAMDAQKAE (190 aa). Cys-276 functions as the Nucleophile in the catalytic mechanism. 5 residues coordinate L-glutamine: Leu-277, Gln-280, Asn-318, Gly-320, and Phe-321. Residues His-360 and Glu-362 contribute to the active site.

It belongs to the CarA family. Composed of two chains; the small (or glutamine) chain promotes the hydrolysis of glutamine to ammonia, which is used by the large (or ammonia) chain to synthesize carbamoyl phosphate. Tetramer of heterodimers (alpha,beta)4.

The enzyme catalyses hydrogencarbonate + L-glutamine + 2 ATP + H2O = carbamoyl phosphate + L-glutamate + 2 ADP + phosphate + 2 H(+). It carries out the reaction L-glutamine + H2O = L-glutamate + NH4(+). It functions in the pathway amino-acid biosynthesis; L-arginine biosynthesis; carbamoyl phosphate from bicarbonate: step 1/1. It participates in pyrimidine metabolism; UMP biosynthesis via de novo pathway; (S)-dihydroorotate from bicarbonate: step 1/3. Functionally, small subunit of the glutamine-dependent carbamoyl phosphate synthetase (CPSase). CPSase catalyzes the formation of carbamoyl phosphate from the ammonia moiety of glutamine, carbonate, and phosphate donated by ATP, constituting the first step of 2 biosynthetic pathways, one leading to arginine and/or urea and the other to pyrimidine nucleotides. The small subunit (glutamine amidotransferase) binds and cleaves glutamine to supply the large subunit with the substrate ammonia. The polypeptide is Carbamoyl phosphate synthase small chain (Ruegeria pomeroyi (strain ATCC 700808 / DSM 15171 / DSS-3) (Silicibacter pomeroyi)).